The sequence spans 267 residues: Tryptophan synthase alpha chain (267 aa).

Catalysis depends on proton acceptor residues Glu49 and Asp60.

It belongs to the TrpA family. Tetramer of two alpha and two beta chains.

It catalyses the reaction (1S,2R)-1-C-(indol-3-yl)glycerol 3-phosphate + L-serine = D-glyceraldehyde 3-phosphate + L-tryptophan + H2O. It participates in amino-acid biosynthesis; L-tryptophan biosynthesis; L-tryptophan from chorismate: step 5/5. In terms of biological role, the alpha subunit is responsible for the aldol cleavage of indoleglycerol phosphate to indole and glyceraldehyde 3-phosphate. This Acinetobacter baylyi (strain ATCC 33305 / BD413 / ADP1) protein is Tryptophan synthase alpha chain.